Reading from the N-terminus, the 132-residue chain is uncharacterized protein (132 aa).

This is an uncharacterized protein from Bacillus subtilis (strain 168).